A 674-amino-acid chain; its full sequence is UvrABC system protein C (674 aa).

The GIY-YIG domain occupies 16 to 95 (TNPGVYRFRD…IKEFKPRFNV (80 aa)). The 36-residue stretch at 207 to 242 (KRFTNKLEKQMAAAVARLDYEQAARIRDDITALRKV) folds into the UVR domain.

The protein belongs to the UvrC family. In terms of assembly, interacts with UvrB in an incision complex.

Its subcellular location is the cytoplasm. The UvrABC repair system catalyzes the recognition and processing of DNA lesions. UvrC both incises the 5' and 3' sides of the lesion. The N-terminal half is responsible for the 3' incision and the C-terminal half is responsible for the 5' incision. This chain is UvrABC system protein C, found in Pseudarthrobacter chlorophenolicus (strain ATCC 700700 / DSM 12829 / CIP 107037 / JCM 12360 / KCTC 9906 / NCIMB 13794 / A6) (Arthrobacter chlorophenolicus).